Here is a 441-residue protein sequence, read N- to C-terminus: 3-oxo-glucose-6-phosphate:glutamate aminotransferase (441 aa).

98-99 (TS) provides a ligand contact to substrate. A pyridoxal 5'-phosphate-binding site is contributed by 125–126 (GT). Phe-151 lines the substrate pocket. Pyridoxal 5'-phosphate is bound by residues Gln-225 and Ser-242. 244-246 (NPY) lines the substrate pocket. N6-(pyridoxal phosphate)lysine is present on Lys-247. Substrate contacts are provided by Tyr-274 and Lys-282. Asn-292 is a pyridoxal 5'-phosphate binding site. Tyr-379 lines the substrate pocket.

This sequence belongs to the DegT/DnrJ/EryC1 family. In terms of assembly, homodimer. It depends on pyridoxal 5'-phosphate as a cofactor.

It carries out the reaction 3-dehydro-D-glucose 6-phosphate + L-glutamate = D-kanosamine 6-phosphate + 2-oxoglutarate. It functions in the pathway antibiotic biosynthesis; kanosamine biosynthesis. Functionally, involved in the biosynthesis of kanosamine (3-amino-3-deoxy-D-glucose), which is known to have antibiotic and antifungal properties, and to be a precursor of the antibiotic neotrehalosadiamine (3,3'-diamino-3,3'-dideoxy-alpha,beta-trehalose (NTD)). Catalyzes the reversible pyridoxal phosphate-dependent transamination of 3-dehydro-alpha-D-glucose 6-phosphate to form alpha-D-kanosamine-6-phosphate. It can only use alpha-anomer and glutamate is the only amino donor. This Bacillus subtilis (strain 168) protein is 3-oxo-glucose-6-phosphate:glutamate aminotransferase (ntdA).